Consider the following 132-residue polypeptide: MTSSTSLKTYVTDKELGGITTPYIIDIIKSIKQIQQRMKDPEIASLEYIKMYDVLGKEFYHFSERHTKIFTEVLQKKNLNTVVSVLYYKDKVEKGELTEEQLQNMLAEKYLPKHLKEEADSRIKEMKERGEI.

This is an uncharacterized protein from Acanthamoeba polyphaga (Amoeba).